Reading from the N-terminus, the 540-residue chain is Membrane protein insertase YidC (540 aa).

5 helical membrane passes run Leu-7 to Tyr-27, Ile-345 to Tyr-365, Leu-415 to Phe-435, Leu-453 to Leu-473, and Pro-494 to Val-514.

Belongs to the OXA1/ALB3/YidC family. Type 1 subfamily. As to quaternary structure, interacts with the Sec translocase complex via SecD. Specifically interacts with transmembrane segments of nascent integral membrane proteins during membrane integration.

It is found in the cell inner membrane. In terms of biological role, required for the insertion and/or proper folding and/or complex formation of integral membrane proteins into the membrane. Involved in integration of membrane proteins that insert both dependently and independently of the Sec translocase complex, as well as at least some lipoproteins. Aids folding of multispanning membrane proteins. This chain is Membrane protein insertase YidC, found in Mannheimia succiniciproducens (strain KCTC 0769BP / MBEL55E).